Here is a 164-residue protein sequence, read N- to C-terminus: UPF0304 protein Asuc_0543 (164 aa).

This sequence belongs to the UPF0304 family.

The sequence is that of UPF0304 protein Asuc_0543 from Actinobacillus succinogenes (strain ATCC 55618 / DSM 22257 / CCUG 43843 / 130Z).